Here is a 536-residue protein sequence, read N- to C-terminus: Zinc finger CCCH domain-containing protein 18 (536 aa).

The segment at 156 to 183 (EFPVKICHYFNKGFCKHGNNCRYFHGQI) adopts a C3H1-type zinc-finger fold. One can recognise an HTH OST-type domain in the interval 211–294 (SLEKLEGEII…HGQHSVILAE (84 aa)). Residues 317–392 (RQIYLTFPAE…ARVLVKPYRE (76 aa)) enclose the RRM domain.

Its function is as follows. Possesses ribonuclease activity in vitro. This chain is Zinc finger CCCH domain-containing protein 18, found in Arabidopsis thaliana (Mouse-ear cress).